The primary structure comprises 291 residues: Pantothenate synthetase (291 aa).

M30–H37 is a binding site for ATP. H37 serves as the catalytic Proton donor. Q61 provides a ligand contact to (R)-pantoate. Position 61 (Q61) interacts with beta-alanine. G147–D150 is an ATP binding site. Residue Q153 participates in (R)-pantoate binding. ATP is bound by residues V176 and C184 to R187.

It belongs to the pantothenate synthetase family. In terms of assembly, homodimer.

The protein localises to the cytoplasm. The enzyme catalyses (R)-pantoate + beta-alanine + ATP = (R)-pantothenate + AMP + diphosphate + H(+). The protein operates within cofactor biosynthesis; (R)-pantothenate biosynthesis; (R)-pantothenate from (R)-pantoate and beta-alanine: step 1/1. Its function is as follows. Catalyzes the condensation of pantoate with beta-alanine in an ATP-dependent reaction via a pantoyl-adenylate intermediate. This chain is Pantothenate synthetase, found in Rhizobium meliloti (strain 1021) (Ensifer meliloti).